A 520-amino-acid polypeptide reads, in one-letter code: Bifunctional dihydrofolate reductase-thymidylate synthase (520 aa).

Residues 26-229 (AFSIVVALDK…LEFEICKYVP (204 aa)) enclose the DHFR domain. Residue Val-30 coordinates substrate. Residues Ala-32 and 38-44 (GIGDGES) contribute to the NADP(+) site. Position 52 (Asp-52) interacts with substrate. Residues 81–83 (RKT), 102–105 (LSSK), and 157–164 (GGAQVYAD) each bind NADP(+). Substrate contacts are provided by Tyr-162 and Thr-180. Residues 234-520 (ERQYLELIDR…HPPIKMEMAV (287 aa)) form a thymidylate synthase region. Arg-254 is a binding site for dUMP. The active site involves Cys-400. Residues His-401, 421 to 425 (QRSCD), Asn-433, and 463 to 465 (HVY) contribute to the dUMP site.

It in the N-terminal section; belongs to the dihydrofolate reductase family. This sequence in the C-terminal section; belongs to the thymidylate synthase family.

The enzyme catalyses (6S)-5,6,7,8-tetrahydrofolate + NADP(+) = 7,8-dihydrofolate + NADPH + H(+). It carries out the reaction dUMP + (6R)-5,10-methylene-5,6,7,8-tetrahydrofolate = 7,8-dihydrofolate + dTMP. Its pathway is cofactor biosynthesis; tetrahydrofolate biosynthesis; 5,6,7,8-tetrahydrofolate from 7,8-dihydrofolate: step 1/1. In terms of biological role, bifunctional enzyme. Involved in de novo dTMP biosynthesis. Key enzyme in folate metabolism. Catalyzes an essential reaction for de novo glycine and purine synthesis, DNA precursor synthesis, and for the conversion of dUMP to dTMP. The sequence is that of Bifunctional dihydrofolate reductase-thymidylate synthase from Leishmania amazonensis.